A 316-amino-acid chain; its full sequence is DnaJ homolog subfamily B member 13 (316 aa).

The J domain maps to 4–68; it reads DYYSVLGITR…MKRGIYDKFG (65 aa).

As to quaternary structure, homodimer. Component of the axonemal radial spoke complex 1 (RS1), at least composed of spoke head proteins RSPH1, RSPH3, RSPH9 and the cilia-specific component RSPH4A or sperm-specific component RSPH6A, spoke stalk proteins RSPH14, DNAJB13, DYDC1, ROPN1L and NME5, and the anchor protein IQUB. Interacts with SUN5. Interacts with IQUB. In terms of tissue distribution, specifically expressed in testis and trachea.

It is found in the cell projection. Its subcellular location is the cilium. The protein localises to the flagellum. Functions as part of axonemal radial spoke complexes that play an important part in the motility of sperm and cilia. This is DnaJ homolog subfamily B member 13 (DNAJB13) from Homo sapiens (Human).